The chain runs to 161 residues: 3-isopropylmalate dehydratase small subunit (161 aa).

This sequence belongs to the LeuD family. LeuD type 2 subfamily. As to quaternary structure, heterodimer of LeuC and LeuD.

It catalyses the reaction (2R,3S)-3-isopropylmalate = (2S)-2-isopropylmalate. It functions in the pathway amino-acid biosynthesis; L-leucine biosynthesis; L-leucine from 3-methyl-2-oxobutanoate: step 2/4. Catalyzes the isomerization between 2-isopropylmalate and 3-isopropylmalate, via the formation of 2-isopropylmaleate. This chain is 3-isopropylmalate dehydratase small subunit, found in Metallosphaera sedula (strain ATCC 51363 / DSM 5348 / JCM 9185 / NBRC 15509 / TH2).